Reading from the N-terminus, the 187-residue chain is uncharacterized protein (187 aa).

Belongs to the isochorismatase family.

This is an uncharacterized protein from Bacillus subtilis (strain 168).